Consider the following 321-residue polypeptide: Peptidase 1 (321 aa).

Residues 1 to 18 (MKFVLAIASLLVLSTVYA) form the signal peptide. The propeptide at 19 to 98 (RPASIKTFEE…LKTQFDLNAE (80 aa)) is activation peptide. 3 disulfide bridges follow: C102–C216, C130–C170, and C164–C202. The active site involves C133. N-linked (GlcNAc...) asparagine glycosylation is present at N151. Active-site residues include H269 and R288.

This sequence belongs to the peptidase C1 family. In terms of assembly, monomer.

It is found in the secreted. The enzyme catalyses Broad endopeptidase specificity.. Thiol protease that hydrolyzes proteins, with a preference for Phe or basic residues. In Dermatophagoides farinae (American house dust mite), this protein is Peptidase 1 (DERF1).